Consider the following 194-residue polypeptide: Crossover junction endodeoxyribonuclease RuvC (194 aa).

Catalysis depends on residues aspartate 8, glutamate 72, and aspartate 144. The Mg(2+) site is built by aspartate 8, glutamate 72, and aspartate 144.

This sequence belongs to the RuvC family. In terms of assembly, homodimer which binds Holliday junction (HJ) DNA. The HJ becomes 2-fold symmetrical on binding to RuvC with unstacked arms; it has a different conformation from HJ DNA in complex with RuvA. In the full resolvosome a probable DNA-RuvA(4)-RuvB(12)-RuvC(2) complex forms which resolves the HJ. Requires Mg(2+) as cofactor.

The protein localises to the cytoplasm. The catalysed reaction is Endonucleolytic cleavage at a junction such as a reciprocal single-stranded crossover between two homologous DNA duplexes (Holliday junction).. Its function is as follows. The RuvA-RuvB-RuvC complex processes Holliday junction (HJ) DNA during genetic recombination and DNA repair. Endonuclease that resolves HJ intermediates. Cleaves cruciform DNA by making single-stranded nicks across the HJ at symmetrical positions within the homologous arms, yielding a 5'-phosphate and a 3'-hydroxyl group; requires a central core of homology in the junction. The consensus cleavage sequence is 5'-(A/T)TT(C/G)-3'. Cleavage occurs on the 3'-side of the TT dinucleotide at the point of strand exchange. HJ branch migration catalyzed by RuvA-RuvB allows RuvC to scan DNA until it finds its consensus sequence, where it cleaves and resolves the cruciform DNA. The polypeptide is Crossover junction endodeoxyribonuclease RuvC (Psychrobacter cryohalolentis (strain ATCC BAA-1226 / DSM 17306 / VKM B-2378 / K5)).